The chain runs to 1481 residues: DNA-directed RNA polymerase subunit beta'' (1481 aa).

Residues C217, C291, C298, and C301 each contribute to the Zn(2+) site.

Belongs to the RNA polymerase beta' chain family. RpoC2 subfamily. As to quaternary structure, in plastids the minimal PEP RNA polymerase catalytic core is composed of four subunits: alpha, beta, beta', and beta''. When a (nuclear-encoded) sigma factor is associated with the core the holoenzyme is formed, which can initiate transcription. Requires Zn(2+) as cofactor.

The protein localises to the plastid. Its subcellular location is the chloroplast. The catalysed reaction is RNA(n) + a ribonucleoside 5'-triphosphate = RNA(n+1) + diphosphate. In terms of biological role, DNA-dependent RNA polymerase catalyzes the transcription of DNA into RNA using the four ribonucleoside triphosphates as substrates. The polypeptide is DNA-directed RNA polymerase subunit beta'' (Trieres chinensis (Marine centric diatom)).